We begin with the raw amino-acid sequence, 181 residues long: Bradykinin-potentiating and C-type natriuretic peptides (181 aa).

The first 23 residues, 1–23, serve as a signal peptide directing secretion; sequence MFVSRLAASGLLLLALLAVSLDG. The propeptide occupies 24-30; sequence KPLQQWS. A Pyrrolidone carboxylic acid modification is found at glutamine 31. A propeptide spanning residues 41–43 is cleaved from the precursor; sequence LVV. Glutamine 44 is subject to Pyrrolidone carboxylic acid. 2 propeptides span residues 50–78 and 90–157; these read TQLQARESPAGGTTALREELSLGPEAALD and GSKA…KGLA. The disordered stretch occupies residues 74–153; sequence EAALDTPPAG…GGGGGGARRL (80 aa). A compositionally biased stretch (low complexity) spans 104 to 114; sequence SKGASATSAAS. Residues 140–150 show a composition bias toward gly residues; the sequence is AGGGGGGGGGA. Cysteine 165 and cysteine 181 are disulfide-bonded.

In the N-terminal section; belongs to the bradykinin-potentiating peptide family. This sequence in the C-terminal section; belongs to the natriuretic peptide family. Venom gland.

The protein localises to the secreted. Functionally, bradykinin-potentiating peptide both inhibits the activity of the angiotensin-converting enzyme (ACE) and enhances the action of bradykinin by inhibiting the peptidases that inactivate it. It acts as an indirect hypotensive agent. Its function is as follows. antagonizes the vasodilatory actions of bradykinin at the B2 bradykinin receptor. Has no demonstrable hypotensive activity when injected intravenously in rats. In terms of biological role, has a vasorelaxant activity in rat aortic strips and a diuretic potency in anesthetized rats. May act by activating natriuretic receptors (NPR1 and/or NPR2). This Crotalus durissus collilineatus (Brazilian rattlesnake) protein is Bradykinin-potentiating and C-type natriuretic peptides.